Here is a 406-residue protein sequence, read N- to C-terminus: Tyrosine--tRNA ligase (406 aa).

Y39 provides a ligand contact to L-tyrosine. The 'HIGH' region signature appears at 44–53; the sequence is PTADSLHVGH. Residues Y172 and Q176 each contribute to the L-tyrosine site. Residues 232–236 carry the 'KMSKS' region motif; that stretch reads KMGKT. Position 235 (K235) interacts with ATP. Residues 344 to 404 enclose the S4 RNA-binding domain; the sequence is KELLDVLVDR…LGKKKFYNIV (61 aa).

It belongs to the class-I aminoacyl-tRNA synthetase family. TyrS type 1 subfamily. In terms of assembly, homodimer.

It is found in the cytoplasm. The enzyme catalyses tRNA(Tyr) + L-tyrosine + ATP = L-tyrosyl-tRNA(Tyr) + AMP + diphosphate + H(+). Catalyzes the attachment of tyrosine to tRNA(Tyr) in a two-step reaction: tyrosine is first activated by ATP to form Tyr-AMP and then transferred to the acceptor end of tRNA(Tyr). This Fusobacterium nucleatum subsp. nucleatum (strain ATCC 25586 / DSM 15643 / BCRC 10681 / CIP 101130 / JCM 8532 / KCTC 2640 / LMG 13131 / VPI 4355) protein is Tyrosine--tRNA ligase.